The sequence spans 167 residues: NADH-ubiquinone oxidoreductase chain 6 (167 aa).

Helical transmembrane passes span 21–41 (SPYY…LLLL), 45–65 (IIFP…VVFI), 78–98 (PINL…ITMI), and 132–152 (SMFI…LEVV).

Belongs to the complex I subunit 6 family.

It localises to the mitochondrion membrane. It carries out the reaction a ubiquinone + NADH + 5 H(+)(in) = a ubiquinol + NAD(+) + 4 H(+)(out). Core subunit of the mitochondrial membrane respiratory chain NADH dehydrogenase (Complex I) that is believed to belong to the minimal assembly required for catalysis. Complex I functions in the transfer of electrons from NADH to the respiratory chain. The immediate electron acceptor for the enzyme is believed to be ubiquinone. In Branchiostoma floridae (Florida lancelet), this protein is NADH-ubiquinone oxidoreductase chain 6 (ND6).